We begin with the raw amino-acid sequence, 386 residues long: Centrosomal protein of 44 kDa (386 aa).

Positions 11 to 194 (RKLEQVLRSL…GVPEGTVTST (184 aa)) are binds with microtubules and centrioles. The stretch at 232–262 (ELTALQIALAECQEKLKKLTWIEKRLECLEA) forms a coiled coil. Position 329 is a phosphoserine (serine 329). A coiled-coil region spans residues 359-382 (SEETTMQKMERMKKMFEETAELLK).

Interacts with CROCC. Interacts with POC1B; the interaction is direct and recruits POC1B to centriolar microtubules. Binds to centriolar microtubules.

The protein resides in the cytoplasm. The protein localises to the cytoskeleton. Its subcellular location is the microtubule organizing center. It is found in the centrosome. It localises to the centriole. The protein resides in the spindle pole. The protein localises to the midbody. Functionally, centriole-enriched microtubule-binding protein involved in centriole biogenesis. In collaboration with CEP295 and POC1B, is required for the centriole-to-centrosome conversion by ensuring the formation of bona fide centriole wall. Functions as a linker component that maintains centrosome cohesion. Associates with CROCC and regulates its stability and localization to the centrosome. The polypeptide is Centrosomal protein of 44 kDa (Cep44) (Rattus norvegicus (Rat)).